The chain runs to 290 residues: Arylamine N-acetyltransferase, pineal gland isozyme NAT-10 (290 aa).

Cysteine 68 functions as the Acyl-thioester intermediate in the catalytic mechanism. Active-site residues include histidine 107 and aspartate 122.

Belongs to the arylamine N-acetyltransferase family.

The enzyme catalyses an arylamine + acetyl-CoA = an N-acetylarylamine + CoA. This Gallus gallus (Chicken) protein is Arylamine N-acetyltransferase, pineal gland isozyme NAT-10.